The chain runs to 64 residues: Large ribosomal subunit protein bL28 (64 aa).

It belongs to the bacterial ribosomal protein bL28 family.

The sequence is that of Large ribosomal subunit protein bL28 from Trichlorobacter lovleyi (strain ATCC BAA-1151 / DSM 17278 / SZ) (Geobacter lovleyi).